Reading from the N-terminus, the 247-residue chain is ATP synthase subunit a, chloroplastic (247 aa).

Helical transmembrane passes span 38–58 (QVLI…TLAV), 95–115 (VPFI…GALL), 134–154 (INTT…AGIS), 199–219 (LVVV…VMFL), and 220–240 (GLFT…AYIG).

The protein belongs to the ATPase A chain family. As to quaternary structure, F-type ATPases have 2 components, CF(1) - the catalytic core - and CF(0) - the membrane proton channel. CF(1) has five subunits: alpha(3), beta(3), gamma(1), delta(1), epsilon(1). CF(0) has four main subunits: a, b, b' and c.

The protein resides in the plastid. It localises to the chloroplast thylakoid membrane. Key component of the proton channel; it plays a direct role in the translocation of protons across the membrane. The chain is ATP synthase subunit a, chloroplastic from Daucus carota (Wild carrot).